The chain runs to 312 residues: Aspartate carbamoyltransferase catalytic subunit (312 aa).

Carbamoyl phosphate contacts are provided by arginine 55 and threonine 56. Residue lysine 83 coordinates L-aspartate. Carbamoyl phosphate contacts are provided by arginine 105, histidine 133, and glutamine 136. L-aspartate is bound by residues arginine 166 and arginine 220. Residues glycine 261 and proline 262 each coordinate carbamoyl phosphate.

Belongs to the aspartate/ornithine carbamoyltransferase superfamily. ATCase family. As to quaternary structure, heterododecamer (2C3:3R2) of six catalytic PyrB chains organized as two trimers (C3), and six regulatory PyrI chains organized as three dimers (R2).

The catalysed reaction is carbamoyl phosphate + L-aspartate = N-carbamoyl-L-aspartate + phosphate + H(+). It functions in the pathway pyrimidine metabolism; UMP biosynthesis via de novo pathway; (S)-dihydroorotate from bicarbonate: step 2/3. In terms of biological role, catalyzes the condensation of carbamoyl phosphate and aspartate to form carbamoyl aspartate and inorganic phosphate, the committed step in the de novo pyrimidine nucleotide biosynthesis pathway. This is Aspartate carbamoyltransferase catalytic subunit from Prosthecochloris aestuarii (strain DSM 271 / SK 413).